A 689-amino-acid polypeptide reads, in one-letter code: DNA ligase (689 aa).

NAD(+)-binding positions include 40–44 (DSEYD), 89–90 (SL), and E121. K123 (N6-AMP-lysine intermediate) is an active-site residue. NAD(+)-binding residues include R144, E179, K295, and K319. The Zn(2+) site is built by C413, C416, C431, and C437. The BRCT domain maps to 610–689 (REQNILTGKI…VEWLAFIKNA (80 aa)).

The protein belongs to the NAD-dependent DNA ligase family. LigA subfamily. Mg(2+) is required as a cofactor. Mn(2+) serves as cofactor.

It carries out the reaction NAD(+) + (deoxyribonucleotide)n-3'-hydroxyl + 5'-phospho-(deoxyribonucleotide)m = (deoxyribonucleotide)n+m + AMP + beta-nicotinamide D-nucleotide.. DNA ligase that catalyzes the formation of phosphodiester linkages between 5'-phosphoryl and 3'-hydroxyl groups in double-stranded DNA using NAD as a coenzyme and as the energy source for the reaction. It is essential for DNA replication and repair of damaged DNA. In Rickettsia prowazekii (strain Madrid E), this protein is DNA ligase.